Consider the following 262-residue polypeptide: Putative outer membrane protein CPn_1034/CP_0818/CPj1034/CpB1074 (262 aa).

The N-terminal stretch at 1–17 is a signal peptide; the sequence is MKTWLFFTFLFSCSSFY.

The protein localises to the cell outer membrane. The chain is Putative outer membrane protein CPn_1034/CP_0818/CPj1034/CpB1074 from Chlamydia pneumoniae (Chlamydophila pneumoniae).